The sequence spans 147 residues: MELSVAMYGLLCLLFSQAVPMCVPTDYTLYEERRECDFCVAINTTICMGFCYSRDSNMKELAGPRFLIQRGCTYDQVEYRTVILPGCPLHANPLFTYPVALSCHCGTCNTDSDECAHKASSGDGARCSKPLRHIYPYPGLNSYIHPN.

A signal peptide spans 1-20; that stretch reads MELSVAMYGLLCLLFSQAVP. 6 disulfides stabilise this stretch: Cys-22–Cys-72, Cys-36–Cys-87, Cys-39–Cys-127, Cys-47–Cys-103, Cys-51–Cys-105, and Cys-108–Cys-115. Asn-43 carries an N-linked (GlcNAc...) asparagine glycan.

The protein belongs to the glycoprotein hormones subunit beta family. As to quaternary structure, heterodimer of a common alpha chain and a unique beta chain which confers biological specificity to thyrotropin, lutropin, follitropin and gonadotropin. As to expression, pituitary gland. Higher levels seen in immature fishes than the mature fishes.

The protein resides in the secreted. In terms of biological role, indispensable for the control of thyroid structure and metabolism. May play some role in the biological processes of the immature fishes. This is Thyrotropin subunit beta (tshb) from Oncorhynchus mykiss (Rainbow trout).